Here is a 553-residue protein sequence, read N- to C-terminus: Methyl-coenzyme M reductase subunit alpha (553 aa).

Position 151 (Q151) interacts with coenzyme F430. Residues R229, 260–261, and R274 contribute to the coenzyme B site; that span reads KH. Residues Y336 and Y447 each contribute to the coenzyme M site.

The protein belongs to the methyl-coenzyme M reductase alpha subunit family. MCR is a hexamer of two alpha, two beta, and two gamma chains, forming a dimer of heterotrimers. Requires coenzyme F430 as cofactor.

The protein localises to the cytoplasm. It carries out the reaction coenzyme B + methyl-coenzyme M = methane + coenzyme M-coenzyme B heterodisulfide. It functions in the pathway one-carbon metabolism; methyl-coenzyme M reduction; methane from methyl-coenzyme M: step 1/1. Functionally, component of the methyl-coenzyme M reductase (MCR) I that catalyzes the reductive cleavage of methyl-coenzyme M (CoM-S-CH3 or 2-(methylthio)ethanesulfonate) using coenzyme B (CoB or 7-mercaptoheptanoylthreonine phosphate) as reductant which results in the production of methane and the mixed heterodisulfide of CoB and CoM (CoM-S-S-CoB). This is the final step in methanogenesis. This chain is Methyl-coenzyme M reductase subunit alpha (mcrA), found in Methanococcus vannielii.